A 333-amino-acid polypeptide reads, in one-letter code: D-alanine--D-alanine ligase (333 aa).

An ATP-grasp domain is found at 124-329 (KMWFSALGIP…FTEYLYSNIK (206 aa)). An ATP-binding site is contributed by 154 to 209 (ALETWGSVFIKAASQGSSVGCYRVDSIDELASSLKEAFSYSPYVVVEKTIHARELE). The Mg(2+) site is built by Asp-283, Glu-296, and Asn-298.

It belongs to the D-alanine--D-alanine ligase family. Requires Mg(2+) as cofactor. The cofactor is Mn(2+).

It localises to the cytoplasm. It catalyses the reaction 2 D-alanine + ATP = D-alanyl-D-alanine + ADP + phosphate + H(+). It participates in cell wall biogenesis; peptidoglycan biosynthesis. Cell wall formation. This chain is D-alanine--D-alanine ligase, found in Shewanella sediminis (strain HAW-EB3).